Reading from the N-terminus, the 127-residue chain is Large ribosomal subunit protein bL12 (127 aa).

Lys77 and Lys88 each carry N6-methyllysine.

This sequence belongs to the bacterial ribosomal protein bL12 family. As to quaternary structure, homodimer. Part of the ribosomal stalk of the 50S ribosomal subunit. Forms a multimeric L10(L12)X complex, where L10 forms an elongated spine to which 2 to 4 L12 dimers bind in a sequential fashion. Binds GTP-bound translation factors.

Its function is as follows. Forms part of the ribosomal stalk which helps the ribosome interact with GTP-bound translation factors. Is thus essential for accurate translation. The protein is Large ribosomal subunit protein bL12 of Nitratidesulfovibrio vulgaris (strain DSM 19637 / Miyazaki F) (Desulfovibrio vulgaris).